Consider the following 192-residue polypeptide: Elongation factor P (192 aa).

Residues 133 to 157 (EVTETTPGVKGDTAQGGDKPATLES) are disordered.

It belongs to the elongation factor P family.

It localises to the cytoplasm. Its pathway is protein biosynthesis; polypeptide chain elongation. Involved in peptide bond synthesis. Stimulates efficient translation and peptide-bond synthesis on native or reconstituted 70S ribosomes in vitro. Probably functions indirectly by altering the affinity of the ribosome for aminoacyl-tRNA, thus increasing their reactivity as acceptors for peptidyl transferase. The sequence is that of Elongation factor P from Salinibacter ruber (strain DSM 13855 / M31).